Here is a 289-residue protein sequence, read N- to C-terminus: Ribosomal protein L11 methyltransferase (289 aa).

Residues T142, G163, D185, and N226 each contribute to the S-adenosyl-L-methionine site.

It belongs to the methyltransferase superfamily. PrmA family.

The protein localises to the cytoplasm. It carries out the reaction L-lysyl-[protein] + 3 S-adenosyl-L-methionine = N(6),N(6),N(6)-trimethyl-L-lysyl-[protein] + 3 S-adenosyl-L-homocysteine + 3 H(+). Its function is as follows. Methylates ribosomal protein L11. The polypeptide is Ribosomal protein L11 methyltransferase (Legionella pneumophila (strain Lens)).